The primary structure comprises 252 residues: Triosephosphate isomerase (252 aa).

9–11 is a substrate binding site; that stretch reads NWK. H96 (electrophile) is an active-site residue. The Proton acceptor role is filled by E168. Substrate contacts are provided by residues G174, S214, and 235-236; that span reads GG.

Belongs to the triosephosphate isomerase family. Homodimer.

It localises to the cytoplasm. It carries out the reaction D-glyceraldehyde 3-phosphate = dihydroxyacetone phosphate. The protein operates within carbohydrate biosynthesis; gluconeogenesis. It functions in the pathway carbohydrate degradation; glycolysis; D-glyceraldehyde 3-phosphate from glycerone phosphate: step 1/1. In terms of biological role, involved in the gluconeogenesis. Catalyzes stereospecifically the conversion of dihydroxyacetone phosphate (DHAP) to D-glyceraldehyde-3-phosphate (G3P). The sequence is that of Triosephosphate isomerase from Chloroherpeton thalassium (strain ATCC 35110 / GB-78).